A 266-amino-acid chain; its full sequence is GTP cyclohydrolase FolE2 (266 aa).

This sequence belongs to the GTP cyclohydrolase IV family.

It catalyses the reaction GTP + H2O = 7,8-dihydroneopterin 3'-triphosphate + formate + H(+). Its pathway is cofactor biosynthesis; 7,8-dihydroneopterin triphosphate biosynthesis; 7,8-dihydroneopterin triphosphate from GTP: step 1/1. In terms of biological role, converts GTP to 7,8-dihydroneopterin triphosphate. The protein is GTP cyclohydrolase FolE2 of Burkholderia mallei (strain ATCC 23344).